We begin with the raw amino-acid sequence, 202 residues long: Na(+)-translocating NADH-quinone reductase subunit E (202 aa).

The next 6 helical transmembrane spans lie at 11 to 31 (AVFI…FIAI), 35 to 55 (VETA…TVPA), 79 to 99 (LSFL…QILE), 114 to 134 (GVFL…LFMV), 144 to 164 (VVYG…LAGI), and 180 to 200 (LGIT…FSGV).

The protein belongs to the NqrDE/RnfAE family. In terms of assembly, composed of six subunits; NqrA, NqrB, NqrC, NqrD, NqrE and NqrF.

The protein resides in the cell inner membrane. The catalysed reaction is a ubiquinone + n Na(+)(in) + NADH + H(+) = a ubiquinol + n Na(+)(out) + NAD(+). In terms of biological role, NQR complex catalyzes the reduction of ubiquinone-1 to ubiquinol by two successive reactions, coupled with the transport of Na(+) ions from the cytoplasm to the periplasm. NqrA to NqrE are probably involved in the second step, the conversion of ubisemiquinone to ubiquinol. The chain is Na(+)-translocating NADH-quinone reductase subunit E from Stutzerimonas stutzeri (strain A1501) (Pseudomonas stutzeri).